The chain runs to 294 residues: tRNA dimethylallyltransferase (294 aa).

Residue 10-17 coordinates ATP; the sequence is GPTAVGKT. 12-17 contributes to the substrate binding site; the sequence is TAVGKT. The interval 35–38 is interaction with substrate tRNA; sequence DSQQ.

Belongs to the IPP transferase family. As to quaternary structure, monomer. Mg(2+) is required as a cofactor.

It carries out the reaction adenosine(37) in tRNA + dimethylallyl diphosphate = N(6)-dimethylallyladenosine(37) in tRNA + diphosphate. Its function is as follows. Catalyzes the transfer of a dimethylallyl group onto the adenine at position 37 in tRNAs that read codons beginning with uridine, leading to the formation of N6-(dimethylallyl)adenosine (i(6)A). The chain is tRNA dimethylallyltransferase from Streptococcus pneumoniae serotype 19F (strain G54).